A 1224-amino-acid polypeptide reads, in one-letter code: DNA-directed RNA polymerase subunit beta' (1224 aa).

The Zn(2+) site is built by C60, C62, C75, and C78. Mg(2+) contacts are provided by D449, D451, and D453. The Zn(2+) site is built by C819, C893, C900, and C903.

The protein belongs to the RNA polymerase beta' chain family. In terms of assembly, the RNAP catalytic core consists of 2 alpha, 1 beta, 1 beta' and 1 omega subunit. When a sigma factor is associated with the core the holoenzyme is formed, which can initiate transcription. Mg(2+) serves as cofactor. It depends on Zn(2+) as a cofactor.

It catalyses the reaction RNA(n) + a ribonucleoside 5'-triphosphate = RNA(n+1) + diphosphate. Its function is as follows. DNA-dependent RNA polymerase catalyzes the transcription of DNA into RNA using the four ribonucleoside triphosphates as substrates. This is DNA-directed RNA polymerase subunit beta' from Lactobacillus johnsonii (strain CNCM I-12250 / La1 / NCC 533).